The following is a 378-amino-acid chain: Probable dihydroorotase-like protein (378 aa).

The protein belongs to the metallo-dependent hydrolases superfamily. DHOase family. PyrC' subfamily.

In terms of biological role, non-functional DHOase. This Helicobacter pylori (strain ATCC 700392 / 26695) (Campylobacter pylori) protein is Probable dihydroorotase-like protein (pyrC').